A 977-amino-acid polypeptide reads, in one-letter code: MKIKVTFQERIIEHNFETEITNLQQVTQKLCSLFLITNYYSYSLFLSSGQLVDNINLIDEGSEIIIKHLNRLGTISIGSGYSNSVVGTTNNNAPSSPSSSININGQQIQQQIQQQIQQQQQQQQQQQQQVQLSPDTLINNLLNNLKDNTFKKKAFFDLKDLKEEILIKKFVEKNGIEVIVCQLKELTGNTLSYALSALQTIMSYEFTITSMTSTDTASLITQLLPLTENTSNPSISKTSLSLLCLFLNQSNNLNFKQFSSTLVLEYNEKTKRNYNHTLVQLLSSSNTVDVQLNALTLINIIIGKTMSTTIPGLENGSVTGGENGFNKLLKELDEYEINQKLKKLVESIIVAPELKRQLYIYQRHRFQVITNRKNVTFNKESSEHDALLMKLWSLTYPGVKLESRVSEQWKQMGFQGTDPCTDFRAMGIWGLDNLIYFAQNYNEKFRKIVNSQIDRKEREYPTATAGIVLTFELYNSIFKMGTPNLNPYNSTTSNTTSNTTSTTNIDDLPFFPLFFSHPHAFEEVYCTTFQILDSTWDDMNGTYMHFQKIMSSVKNLIITALESKPTTLEAFDWKCQKNTKNSNGGTNSNQNNSSSNLLLSNFANGSSLLSLLNDLSSSSRDDMKKLLTGVNYQVLDLIKSQKISYFQEGFQFKLHKQLKTKQSLPLNWIFIRLFNNNNNNNNNNENCSYEIQYCFLSTELNQPPLPNQSIPTNYNTIKISDLFFNGESTNSNNKKKDKSLSYFNISIKDEQIQSLIQNQLPLSNLNNSSNSLQLDSSTSMNSIKDSIINISSSNNNIKDNLTNNNTNTNTNNTNNNTSNGNGNSNSVSMSSININNSGQLSPNTTSPILIPQQQQQQPQSSSLSVQHQQSSTPTPSSPVLLSSPSLQSSSSSSSSSSNPNLFTIDLISSNRDDVSNFWDSIKLLSGQEIKSQEGLDDYHSLLSINTSVKLLDLDGIDIPKETPQIPILPDNFDFRTV.

The ELMO domain occupies 383-561; the sequence is EHDALLMKLW…SVKNLIITAL (179 aa). Low complexity-rich tracts occupy residues 792–838 and 852–897; these read SSNN…NNSG and QQQQ…SSSS. Residues 792-899 form a disordered region; it reads SSNNNIKDNL…SSSSSSSSNP (108 aa).

As to quaternary structure, associates with mhcA.

In terms of biological role, functions as a negative regulator of actin polymerization. Modulates actin/myosin II at cortex actinomyosins to prevent excessive F-actin polymerization around the cell periphery, thereby maintaining proper cell shape during phagocytosis and chemotaxis. The protein is ELMO domain-containing protein A (elmoA) of Dictyostelium discoideum (Social amoeba).